The primary structure comprises 93 residues: UPF0473 protein CHY_0543 (93 aa).

Belongs to the UPF0473 family.

This Carboxydothermus hydrogenoformans (strain ATCC BAA-161 / DSM 6008 / Z-2901) protein is UPF0473 protein CHY_0543.